The following is a 418-amino-acid chain: Putative competence-damage inducible protein (418 aa).

The protein belongs to the CinA family.

The chain is Putative competence-damage inducible protein from Streptococcus pneumoniae (strain CGSP14).